Consider the following 378-residue polypeptide: 5-amino-6-(D-ribitylamino)uracil--L-tyrosine 4-hydroxyphenyl transferase (378 aa).

In terms of domain architecture, Radical SAM core spans 59–306 (VTYVINRNIN…TAVARIYLGN (248 aa)). Cys73, Cys77, and Cys80 together coordinate [4Fe-4S] cluster.

The protein belongs to the radical SAM superfamily. CofH family. As to quaternary structure, consists of two subunits, CofG and CofH. Requires [4Fe-4S] cluster as cofactor.

It catalyses the reaction 5-amino-6-(D-ribitylamino)uracil + L-tyrosine + S-adenosyl-L-methionine = 5-amino-5-(4-hydroxybenzyl)-6-(D-ribitylimino)-5,6-dihydrouracil + 2-iminoacetate + 5'-deoxyadenosine + L-methionine + H(+). Its pathway is cofactor biosynthesis; coenzyme F0 biosynthesis. Catalyzes the radical-mediated synthesis of 5-amino-5-(4-hydroxybenzyl)-6-(D-ribitylimino)-5,6-dihydrouracil from 5-amino-6-(D-ribitylamino)uracil and L-tyrosine. This Microcystis aeruginosa (strain NIES-843 / IAM M-2473) protein is 5-amino-6-(D-ribitylamino)uracil--L-tyrosine 4-hydroxyphenyl transferase.